Here is a 156-residue protein sequence, read N- to C-terminus: Ribosomal RNA large subunit methyltransferase H (156 aa).

Residues Leu73, Gly104, and 123-128 (LSPLTF) each bind S-adenosyl-L-methionine.

The protein belongs to the RNA methyltransferase RlmH family. As to quaternary structure, homodimer.

The protein resides in the cytoplasm. It carries out the reaction pseudouridine(1915) in 23S rRNA + S-adenosyl-L-methionine = N(3)-methylpseudouridine(1915) in 23S rRNA + S-adenosyl-L-homocysteine + H(+). Functionally, specifically methylates the pseudouridine at position 1915 (m3Psi1915) in 23S rRNA. The polypeptide is Ribosomal RNA large subunit methyltransferase H (Thioalkalivibrio sulfidiphilus (strain HL-EbGR7)).